The following is a 592-amino-acid chain: Protein US23 (592 aa).

The tract at residues 407 to 491 (PRSLGDGEEE…NNVVPNVDRR (85 aa)) is disordered. Over residues 460–481 (ADDEEQGEDDDDSGAEPMEPEE) the composition is skewed to acidic residues.

Belongs to the herpesviridae US22 family.

It localises to the virion tegument. The polypeptide is Protein US23 (US23) (Homo sapiens (Human)).